Here is a 693-residue protein sequence, read N- to C-terminus: A disintegrin and metalloproteinase with thrombospondin motifs like (693 aa).

Positions 1 to 24 (MESSVATHWLSAFVILCSFITTQS) are cleaved as a signal peptide. A compositionally biased stretch (polar residues) spans 67 to 80 (IPTSHPANSNSADS). Residues 67–91 (IPTSHPANSNSADSGKTPHLKTEKV) form a disordered region. 2 N-linked (GlcNAc...) asparagine glycosylation sites follow: N124 and N194. The region spanning 353-585 (IYPEILVIVD…DTATCLYNSP (233 aa)) is the Peptidase M12B domain. 2 disulfides stabilise this stretch: C485-C580 and C541-C564. H514 lines the Zn(2+) pocket. The Metal-binding signature appears at 514-525 (HEVGHLLGAVHD). E515 is an active-site residue. Zn(2+)-binding residues include H518 and H524. N-linked (GlcNAc...) asparagine glycosylation occurs at N687.

Zn(2+) is required as a cofactor.

It is found in the secreted. The protein resides in the extracellular space. Its subcellular location is the extracellular matrix. Functionally, involved in larval molting and metamorphosis. May degrade extracellular matrix (ECM) and basement membrane (BM) during the development of organs to allow degeneration and remodeling of tissues. This is A disintegrin and metalloproteinase with thrombospondin motifs like from Bombyx mori (Silk moth).